We begin with the raw amino-acid sequence, 926 residues long: Alpha-aminoadipic semialdehyde synthase, mitochondrial (926 aa).

A mitochondrion-targeting transit peptide spans 1–27 (MLRAQRLRLARLRACVSRGLHHKPVMA). Residues 28-455 (LRREDVNAWE…DAVITSNGLL (428 aa)) form a lysine-ketoglutarate reductase region. N6-acetyllysine occurs at positions 48, 52, and 56. Residue Lys-93 is modified to N6-acetyllysine; alternate. Lys-93 bears the N6-succinyllysine; alternate mark. Lys-128 is subject to N6-acetyllysine. At Lys-138 the chain carries N6-acetyllysine; alternate. Position 138 is an N6-succinyllysine; alternate (Lys-138). The residue at position 274 (Lys-274) is an N6-succinyllysine. At Lys-286 the chain carries N6-acetyllysine; alternate. At Lys-286 the chain carries N6-succinyllysine; alternate. Position 333 is an N6-succinyllysine (Lys-333). Lys-458 is modified (N6-acetyllysine; alternate). The residue at position 458 (Lys-458) is an N6-succinyllysine; alternate. A saccharopine dehydrogenase region spans residues 477-926 (MSTKKKVLVL…VFNTQSTIKL (450 aa)). NAD(+) contacts are provided by Ser-488, Asp-512, and Gln-516. N6-acetyllysine; alternate is present on residues Lys-523 and Lys-535. N6-succinyllysine; alternate occurs at positions 523 and 535. The NAD(+) site is built by Leu-554, Ala-576, and Ser-577. An L-saccharopine-binding site is contributed by 577–578 (SY). The residue at position 584 (Lys-584) is an N6-acetyllysine; alternate. Lys-584 carries the post-translational modification N6-succinyllysine; alternate. NAD(+) is bound by residues Leu-603, Asp-604, and Pro-605. L-saccharopine is bound at residue Asp-604. Arg-703 provides a ligand contact to L-saccharopine. Lys-707 carries the post-translational modification N6-acetyllysine. 724 to 726 (TLR) contributes to the L-saccharopine binding site. N6-succinyllysine is present on Lys-732. Residue Lys-739 is modified to N6-acetyllysine. At Lys-761 the chain carries N6-acetyllysine; alternate. At Lys-761 the chain carries N6-succinyllysine; alternate. Lys-778 and Lys-780 each carry N6-acetyllysine.

The protein in the N-terminal section; belongs to the AlaDH/PNT family. It in the C-terminal section; belongs to the saccharopine dehydrogenase family. In terms of assembly, homotetramer.

It is found in the mitochondrion. The catalysed reaction is L-saccharopine + NADP(+) + H2O = L-lysine + 2-oxoglutarate + NADPH + H(+). It carries out the reaction L-saccharopine + NAD(+) + H2O = (S)-2-amino-6-oxohexanoate + L-glutamate + NADH + H(+). The protein operates within amino-acid degradation; L-lysine degradation via saccharopine pathway; glutaryl-CoA from L-lysine: step 1/6. It functions in the pathway amino-acid degradation; L-lysine degradation via saccharopine pathway; glutaryl-CoA from L-lysine: step 2/6. In terms of biological role, bifunctional enzyme that catalyzes the first two steps in lysine degradation. The chain is Alpha-aminoadipic semialdehyde synthase, mitochondrial from Rattus norvegicus (Rat).